A 2061-amino-acid chain; its full sequence is Putative PWWP domain-containing DNA repair factor 4 (2061 aa).

Disordered stretches follow at residues 101–211 (TNLG…SRAR), 382–408 (ALGR…RSSV), 541–586 (TPGT…GDGS), 668–694 (PATL…GDGS), 864–910 (PTPG…SERS), 1046–1072 (PGTM…GDRS), 1159–1182 (ALHG…RGDS), 1205–1383 (KAIA…RDDK), 1521–1548 (PGAL…DSSP), and 1602–1726 (KKGK…KLAN). Composition is skewed to basic and acidic residues over residues 133 to 153 (PRED…KREN) and 162 to 173 (ESKRALRDDRSQ). The span at 397–408 (TPGTLQGNRSSV) shows a compositional bias: polar residues. Residues 1051–1061 (GDSSTARTATA) are compositionally biased toward polar residues. Positions 1364–1373 (DSSQVHTTIA) are enriched in polar residues. Over residues 1639 to 1648 (LKEETQDSRP) the composition is skewed to basic and acidic residues. Positions 1656–1665 (PESSPFSGNI) are enriched in polar residues. Residues 1756-1817 (RGTMVWFKFQ…KHLDCKEKEK (62 aa)) form the PWWP domain.

Belongs to the PWWP3A family.

The polypeptide is Putative PWWP domain-containing DNA repair factor 4 (Homo sapiens (Human)).